Here is a 218-residue protein sequence, read N- to C-terminus: N-(5'-phosphoribosyl)anthranilate isomerase (218 aa).

Belongs to the TrpF family.

The enzyme catalyses N-(5-phospho-beta-D-ribosyl)anthranilate = 1-(2-carboxyphenylamino)-1-deoxy-D-ribulose 5-phosphate. The protein operates within amino-acid biosynthesis; L-tryptophan biosynthesis; L-tryptophan from chorismate: step 3/5. The chain is N-(5'-phosphoribosyl)anthranilate isomerase from Bordetella parapertussis (strain 12822 / ATCC BAA-587 / NCTC 13253).